The chain runs to 175 residues: Alpha-crystallin B chain (175 aa).

Residue M1 is modified to N-acetylmethionine. Phosphoserine is present on residues S19, S45, and S59. The region spanning R56–E164 is the sHSP domain. Residue H83 coordinates Zn(2+). An N6-acetyllysine modification is found at K92. Positions 104, 106, 111, and 119 each coordinate Zn(2+). Residues V142–K175 form a disordered region. N6-acetyllysine is present on K166. O-linked (GlcNAc) threonine glycosylation occurs at T170.

This sequence belongs to the small heat shock protein (HSP20) family. In terms of assembly, heteromer composed of three CRYAA and one CRYAB subunits. Aggregates with homologous proteins, including the small heat shock protein HSPB1, to form large heteromeric complexes. Inter-subunit bridging via zinc ions enhances stability, which is crucial as there is no protein turn over in the lens. Interacts with HSPBAP1. Interacts with TTN/titin. Interacts with TMEM109; in the cellular response to DNA damage. Interacts with DES; binds rapidly during early stages of DES filament assembly and a reduced binding seen in the later stages. Interacts with TMED10; the interaction mediates the translocation from the cytoplasm into the ERGIC (endoplasmic reticulum-Golgi intermediate compartment) and thereby secretion. Interacts with ATP6V1A and with MTOR, forming a ternary complex. As to expression, lens as well as other tissues.

It localises to the cytoplasm. The protein localises to the nucleus. The protein resides in the secreted. It is found in the lysosome. Its function is as follows. May contribute to the transparency and refractive index of the lens. Has chaperone-like activity, preventing aggregation of various proteins under a wide range of stress conditions. In lens epithelial cells, stabilizes the ATP6V1A protein, preventing its degradation by the proteasome. The polypeptide is Alpha-crystallin B chain (Rattus norvegicus (Rat)).